Here is a 329-residue protein sequence, read N- to C-terminus: Ribosomal RNA small subunit methyltransferase H (329 aa).

S-adenosyl-L-methionine contacts are provided by residues 46-48, aspartate 65, phenylalanine 92, aspartate 113, and histidine 120; that span reads GGH. Positions 295–329 are disordered; it reads RGAERPSPAEVAANPRAASARLRAAEKIRDTREAA. Basic and acidic residues predominate over residues 317 to 329; the sequence is RAAEKIRDTREAA.

This sequence belongs to the methyltransferase superfamily. RsmH family.

Its subcellular location is the cytoplasm. The catalysed reaction is cytidine(1402) in 16S rRNA + S-adenosyl-L-methionine = N(4)-methylcytidine(1402) in 16S rRNA + S-adenosyl-L-homocysteine + H(+). In terms of biological role, specifically methylates the N4 position of cytidine in position 1402 (C1402) of 16S rRNA. This is Ribosomal RNA small subunit methyltransferase H from Acidothermus cellulolyticus (strain ATCC 43068 / DSM 8971 / 11B).